The following is a 181-amino-acid chain: MFKKFDEKESVSNCIQLKTSVIKGIKSQLVEQFPGIEPWLNQIMPKKDPVKIVRCHEHTEILTVSGELLFFRQRKGPFCPTLRLLHKYPFILPHQQVDKGAIKFVLSGANIMCPGLTSPGAKLYPAAVDTIVAVTAEGKQHALCVGVMKMSAEDIEKVNKGIGIENIHYLNDGLWHMKTYK.

Residues 92 to 171 form the PUA domain; the sequence is LPHQQVDKGA…IGIENIHYLN (80 aa).

Belongs to the MCTS1 family.

Its subcellular location is the cytoplasm. This is Malignant T-cell-amplified sequence 2 from Homo sapiens (Human).